We begin with the raw amino-acid sequence, 2067 residues long: Nuclear receptor coactivator 6 (2067 aa).

The tract at residues Met1–Gln932 is TBP/GTF2A-binding region. The interval Met1–Pro1060 is CREBBP-binding region. The NCOA1-binding region stretch occupies residues Met1–Val1314. An Asymmetric dimethylarginine modification is found at Arg95. Disordered stretches follow at residues Ala181–Asn253 and Thr293–Ser548. A compositionally biased stretch (low complexity) spans Thr293–Gln304. Polar residues-rich tracts occupy residues Ser338–Gly347, Met357–Thr372, Gly383–Ala405, Pro421–Met457, Asn465–Gln506, and Gly526–Ser548. The interval Val777–His931 is NCOA6IP-binding region. Ser888 is modified (phosphoserine). An LXXLL motif 1 motif is present at residues Leu891–Leu895. Disordered stretches follow at residues His903–Asn1279, Val1313–Leu1358, Asn1424–Lys1481, Gln1497–Val1581, and Leu1769–Lys1822. A compositionally biased stretch (low complexity) spans Asn907–Asn916. A compositionally biased stretch (basic residues) spans Lys917–Asn929. A compositionally biased stretch (low complexity) spans Gln984–Gln996. Residues Ala999–Gln1024 show a composition bias toward pro residues. Positions Pro1025 to Gln1044 are enriched in low complexity. Asymmetric dimethylarginine is present on residues Arg1050 and Arg1061. Residues Pro1066–Asn1078 are compositionally biased toward polar residues. The residue at position 1099 (Arg1099) is an Asymmetric dimethylarginine. Over residues Ser1103–Asn1123 the composition is skewed to polar residues. The segment covering Ser1124–Glu1137 has biased composition (low complexity). 3 stretches are compositionally biased toward polar residues: residues Asn1152 to Met1165, Leu1176 to Ser1194, and Ala1205 to Arg1217. Positions Pro1222 to Thr1235 are enriched in pro residues. Over residues Val1313 to Thr1324 the composition is skewed to polar residues. The segment covering Lys1326–Gly1349 has biased composition (low complexity). The span at Asn1424–Gln1435 shows a compositional bias: polar residues. The short motif at Leu1495 to Leu1499 is the LXXLL motif 2 element. Over residues Glu1545 to Leu1562 the composition is skewed to low complexity. The EP300/CRSP3-binding region stretch occupies residues Ser1644–Lys2067. The span at Ser1775–Gly1805 shows a compositional bias: polar residues. A compositionally biased stretch (low complexity) spans Ser1806–Lys1818. N6-acetyllysine is present on residues Lys1822 and Lys1825. Disordered regions lie at residues Gly1840–Gly1911 and Val1957–Lys2067. The segment covering Glu1871 to Thr1883 has biased composition (polar residues). The span at Met1892 to Thr1904 shows a compositional bias: low complexity. A compositionally biased stretch (basic and acidic residues) spans Glu2005–Lys2014. The residue at position 2022 (Ser2022) is a Phosphoserine.

As to quaternary structure, monomer and homodimer. Interacts in vitro with the basal transcription factors GTF2A and TBP, suggesting an autonomous transactivation function. Interacts with NCOA1, CRSP3, RBM14, the histone acetyltransferase proteins EP300 and CREBBP, and with methyltransferase proteins NCOA6IP and PRMT2. Interacts with RBM39. Component of the MLL2/3 complex (also named ASCOM complex), at least composed of KMT2D/MLL2 or KMT2C/MLL3, ASH2L, RBBP5, WDR5, NCOA6, DPY30, KDM6A, PAXIP1/PTIP, PAGR1 and alpha- and beta-tubulin. Interacts with ZNF335; may enhance ligand-dependent transcriptional activation by nuclear hormone receptors. In terms of processing, phosphorylated. In terms of tissue distribution, widely expressed. High expression in testis and weak expression in small intestine.

Its subcellular location is the nucleus. Nuclear receptor coactivator that directly binds nuclear receptors and stimulates the transcriptional activities in a hormone-dependent fashion. Coactivates expression in an agonist- and AF2-dependent manner. Involved in the coactivation of different nuclear receptors, such as for steroids (GR and ERs), retinoids (RARs and RXRs), thyroid hormone (TRs), vitamin D3 (VDR) and prostanoids (PPARs). Probably functions as a general coactivator, rather than just a nuclear receptor coactivator. May also be involved in the coactivation of the NF-kappa-B pathway. May coactivate expression via a remodeling of chromatin and its interaction with histone acetyltransferase proteins. Involved in placental, cardiac, hepatic and embryonic development. The polypeptide is Nuclear receptor coactivator 6 (Ncoa6) (Mus musculus (Mouse)).